We begin with the raw amino-acid sequence, 534 residues long: Probable DNA polymerase epsilon subunit 2 (534 aa).

Belongs to the DNA polymerase epsilon subunit B family. As to quaternary structure, consists of four subunits.

The protein localises to the nucleus. Accessory component of the DNA polymerase epsilon complex. Participates in DNA repair and in chromosomal DNA replication. This chain is Probable DNA polymerase epsilon subunit 2 (pole-2), found in Caenorhabditis elegans.